Here is a 290-residue protein sequence, read N- to C-terminus: MITVRTIPELRAAIAAHPGTGRPGKGRPAFVPTMGNLHDGHIALVRQARPLGDVLVASIFVNRLQFLPYEDFDSYPRTWEADCAKLEAAGCDIVFAPRESDLYPEPQTFKLQPDPQLADILEGHFRPGFFTGVCTVVMKLFSAVFFASGGGTAVFGKKDYQQLMVIRRMVQQFALPVEVVAGETARADDGLALSSRNGYLSTAERAQAVQLSAALRALAQAAQAPGAPPLAALEQQALQTLAQQGWAPDYLTVRQRHDLQPPAAGAAAGTLVALGAARLGSTRLIDNLEF.

34–41 contacts ATP; it reads MGNLHDGH. His-41 acts as the Proton donor in catalysis. Residue Gln-65 participates in (R)-pantoate binding. A beta-alanine-binding site is contributed by Gln-65. An ATP-binding site is contributed by 156–159; that stretch reads GKKD. A (R)-pantoate-binding site is contributed by Gln-162. ATP contacts are provided by residues Ala-185 and 193-196; that span reads LSSR.

Belongs to the pantothenate synthetase family. As to quaternary structure, homodimer.

The protein resides in the cytoplasm. The enzyme catalyses (R)-pantoate + beta-alanine + ATP = (R)-pantothenate + AMP + diphosphate + H(+). The protein operates within cofactor biosynthesis; (R)-pantothenate biosynthesis; (R)-pantothenate from (R)-pantoate and beta-alanine: step 1/1. Functionally, catalyzes the condensation of pantoate with beta-alanine in an ATP-dependent reaction via a pantoyl-adenylate intermediate. The sequence is that of Pantothenate synthetase from Acidovorax ebreus (strain TPSY) (Diaphorobacter sp. (strain TPSY)).